The primary structure comprises 721 residues: Ribonuclease R (721 aa).

The 339-residue stretch at arginine 249–phenylalanine 587 folds into the RNB domain. In terms of domain architecture, S1 motif spans glycine 639–valine 719.

It belongs to the RNR ribonuclease family. RNase R subfamily.

The protein resides in the cytoplasm. The catalysed reaction is Exonucleolytic cleavage in the 3'- to 5'-direction to yield nucleoside 5'-phosphates.. In terms of biological role, 3'-5' exoribonuclease that releases 5'-nucleoside monophosphates and is involved in maturation of structured RNAs. The polypeptide is Ribonuclease R (Ureaplasma parvum serovar 3 (strain ATCC 700970)).